The sequence spans 408 residues: Aminopeptidase T (408 aa).

Positions 250, 316, 340, 345, 376, and 378 each coordinate a divalent metal cation.

It belongs to the peptidase M29 family. Homodimer. Co(2+) serves as cofactor. The cofactor is Zn(2+). Mg(2+) is required as a cofactor.

Functionally, metal-dependent exopeptidase. The chain is Aminopeptidase T from Thermus aquaticus.